We begin with the raw amino-acid sequence, 312 residues long: Malate dehydrogenase (312 aa).

Residues 12 to 17 and Asp-36 contribute to the NAD(+) site; that span reads GAGFTG. Arg-87 and Arg-93 together coordinate substrate. NAD(+)-binding positions include Asn-100 and 123-125; that span reads LTN. Asn-125 is a binding site for substrate. Ser-149 carries the post-translational modification Phosphoserine. Arg-156 serves as a coordination point for substrate. Catalysis depends on His-180, which acts as the Proton acceptor.

The protein belongs to the LDH/MDH superfamily. MDH type 3 family.

The catalysed reaction is (S)-malate + NAD(+) = oxaloacetate + NADH + H(+). In terms of biological role, catalyzes the reversible oxidation of malate to oxaloacetate. In Bacillus cereus (strain ZK / E33L), this protein is Malate dehydrogenase.